Here is a 307-residue protein sequence, read N- to C-terminus: Protoheme IX farnesyltransferase (307 aa).

The next 8 membrane-spanning stretches (helical) occupy residues 24 to 44, 52 to 72, 115 to 135, 152 to 172, 179 to 199, 224 to 244, 245 to 265, and 284 to 304; these read ISLL…VGLV, PVIA…AGAL, VVLG…TIFF, IVIG…AASG, VILV…LSLY, QILL…MLGE, AGLA…LLAV, and FGFS…EALV.

Belongs to the UbiA prenyltransferase family. Protoheme IX farnesyltransferase subfamily.

Its subcellular location is the cell inner membrane. The catalysed reaction is heme b + (2E,6E)-farnesyl diphosphate + H2O = Fe(II)-heme o + diphosphate. It functions in the pathway porphyrin-containing compound metabolism; heme O biosynthesis; heme O from protoheme: step 1/1. In terms of biological role, converts heme B (protoheme IX) to heme O by substitution of the vinyl group on carbon 2 of heme B porphyrin ring with a hydroxyethyl farnesyl side group. The protein is Protoheme IX farnesyltransferase of Azorhizobium caulinodans (strain ATCC 43989 / DSM 5975 / JCM 20966 / LMG 6465 / NBRC 14845 / NCIMB 13405 / ORS 571).